We begin with the raw amino-acid sequence, 429 residues long: Na(+)/H(+) antiporter NhaA 1 (429 aa).

The next 12 membrane-spanning stretches (helical) occupy residues 32 to 52 (ISGG…NSPW), 73 to 93 (LSVQ…VAGL), 111 to 131 (VVPV…YSLL), 140 to 160 (GWAI…AVVG), 170 to 190 (FLLT…AVAY), 193 to 213 (ELSV…TLLV), 219 to 239 (AWWL…ASGV), 243 to 263 (VAGV…AGGP), 284 to 304 (VAVP…LGGL), 316 to 336 (VVVG…WLVA), 349 to 369 (WVDV…SLLI), and 383 to 403 (HVKV…TVVL).

Belongs to the NhaA Na(+)/H(+) (TC 2.A.33) antiporter family.

It localises to the cell membrane. The catalysed reaction is Na(+)(in) + 2 H(+)(out) = Na(+)(out) + 2 H(+)(in). In terms of biological role, na(+)/H(+) antiporter that extrudes sodium in exchange for external protons. The polypeptide is Na(+)/H(+) antiporter NhaA 1 (Frankia alni (strain DSM 45986 / CECT 9034 / ACN14a)).